The following is a 245-amino-acid chain: Pyridoxine 5'-phosphate synthase (245 aa).

A 3-amino-2-oxopropyl phosphate-binding site is contributed by Asn7. Position 9 to 10 (9 to 10 (DH)) interacts with 1-deoxy-D-xylulose 5-phosphate. Arg18 lines the 3-amino-2-oxopropyl phosphate pocket. The active-site Proton acceptor is the His43. Residues Arg45 and His50 each contribute to the 1-deoxy-D-xylulose 5-phosphate site. The Proton acceptor role is filled by Glu70. Residue Thr100 coordinates 1-deoxy-D-xylulose 5-phosphate. His190 functions as the Proton donor in the catalytic mechanism. 3-amino-2-oxopropyl phosphate contacts are provided by residues Gly191 and 212–213 (GH).

It belongs to the PNP synthase family. As to quaternary structure, homooctamer; tetramer of dimers.

It is found in the cytoplasm. The enzyme catalyses 3-amino-2-oxopropyl phosphate + 1-deoxy-D-xylulose 5-phosphate = pyridoxine 5'-phosphate + phosphate + 2 H2O + H(+). Its pathway is cofactor biosynthesis; pyridoxine 5'-phosphate biosynthesis; pyridoxine 5'-phosphate from D-erythrose 4-phosphate: step 5/5. Functionally, catalyzes the complicated ring closure reaction between the two acyclic compounds 1-deoxy-D-xylulose-5-phosphate (DXP) and 3-amino-2-oxopropyl phosphate (1-amino-acetone-3-phosphate or AAP) to form pyridoxine 5'-phosphate (PNP) and inorganic phosphate. The sequence is that of Pyridoxine 5'-phosphate synthase from Prochlorococcus marinus (strain MIT 9313).